A 258-amino-acid polypeptide reads, in one-letter code: UPF0246 protein Bpro_3713 (258 aa).

It belongs to the UPF0246 family.

The sequence is that of UPF0246 protein Bpro_3713 from Polaromonas sp. (strain JS666 / ATCC BAA-500).